Here is a 273-residue protein sequence, read N- to C-terminus: Dermonecrotic toxin LdSicTox-alphaIB3b (273 aa).

His-5 is a catalytic residue. The Mg(2+) site is built by Glu-25 and Asp-27. His-41 serves as the catalytic Nucleophile. Cystine bridges form between Cys-45/Cys-51 and Cys-47/Cys-190. Position 85 (Asp-85) interacts with Mg(2+).

The protein belongs to the arthropod phospholipase D family. Class II subfamily. It depends on Mg(2+) as a cofactor. Expressed by the venom gland.

The protein localises to the secreted. The catalysed reaction is an N-(acyl)-sphingosylphosphocholine = an N-(acyl)-sphingosyl-1,3-cyclic phosphate + choline. It carries out the reaction an N-(acyl)-sphingosylphosphoethanolamine = an N-(acyl)-sphingosyl-1,3-cyclic phosphate + ethanolamine. The enzyme catalyses a 1-acyl-sn-glycero-3-phosphocholine = a 1-acyl-sn-glycero-2,3-cyclic phosphate + choline. It catalyses the reaction a 1-acyl-sn-glycero-3-phosphoethanolamine = a 1-acyl-sn-glycero-2,3-cyclic phosphate + ethanolamine. In terms of biological role, dermonecrotic toxins cleave the phosphodiester linkage between the phosphate and headgroup of certain phospholipids (sphingolipid and lysolipid substrates), forming an alcohol (often choline) and a cyclic phosphate. This toxin acts on sphingomyelin (SM). It may also act on ceramide phosphoethanolamine (CPE), lysophosphatidylcholine (LPC) and lysophosphatidylethanolamine (LPE), but not on lysophosphatidylserine (LPS), and lysophosphatidylglycerol (LPG). It acts by transphosphatidylation, releasing exclusively cyclic phosphate products as second products. Induces dermonecrosis, hemolysis, increased vascular permeability, edema, inflammatory response, and platelet aggregation. The protein is Dermonecrotic toxin LdSicTox-alphaIB3b of Loxosceles deserta (Desert recluse spider).